The primary structure comprises 822 residues: Coiled-coil domain-containing protein 175 (822 aa).

Coiled-coil stretches lie at residues 129–164 (IIEI…EVLG), 223–397 (IEKQ…KQMM), and 510–537 (HLIE…IEEL).

The chain is Coiled-coil domain-containing protein 175 (Ccdc175) from Mus musculus (Mouse).